Here is a 411-residue protein sequence, read N- to C-terminus: Prostaglandin E2 receptor EP3 subtype (411 aa).

The Extracellular segment spans residues 1 to 49; sequence MKETRGDGGSAPFCTRLNHSYPGMWAPEARGNLTRPPGPGEDCGSVSVA. Residues asparagine 18 and asparagine 32 are each glycosylated (N-linked (GlcNAc...) asparagine). Residues 50-74 form a helical membrane-spanning segment; that stretch reads FPITMLITGFVGNALAMLLVSRSYR. The Cytoplasmic segment spans residues 75–87; sequence RRESKRKKSFLLC. The chain crosses the membrane as a helical span at residues 88 to 108; that stretch reads IGWLALTDLVGQLLTSPVVIL. The Extracellular portion of the chain corresponds to 109–127; the sequence is VYLSKQRWEQLDPSGRLCT. Cysteines 126 and 204 form a disulfide. Residues 128–149 form a helical membrane-spanning segment; the sequence is FFGLTMTVFGLSSLFIASAMAV. At 150 to 171 the chain is on the cytoplasmic side; sequence ERALAIRAPHWYASHMKTRATR. The helical transmembrane segment at 172 to 193 threads the bilayer; sequence AVLLGVWLAVLAFALLPVLGVG. The Extracellular portion of the chain corresponds to 194–223; it reads QYTIQWPGTWCFISTGRGDNGTSSSHNWGN. Asparagine 213 is a glycosylation site (N-linked (GlcNAc...) asparagine). A helical transmembrane segment spans residues 224-249; the sequence is LFFASTFAFLGLLALAITFTCNLATI. Residues 250–279 lie on the Cytoplasmic side of the membrane; the sequence is KALVSRCRAKAAASQSSAQWGRITTETAIQ. The helical transmembrane segment at 280–303 threads the bilayer; sequence LMGIMCVLSVCWSPLLIMMLKMIF. Residues 304-323 are Extracellular-facing; it reads NQTSVEHCKTDTGKQKECNF. The chain crosses the membrane as a helical span at residues 324-345; it reads FLIAVRLASLNQILDPWVYLLL. Over 346-411 the chain is Cytoplasmic; that stretch reads RKILLRKFCQ…ADPGARPYQQ (66 aa). Residues 367–390 show a composition bias toward basic and acidic residues; sequence IQRENRNVSHSGQHEEARDSEKSK. The tract at residues 367 to 392 is disordered; sequence IQRENRNVSHSGQHEEARDSEKSKTI.

Belongs to the G-protein coupled receptor 1 family. As to quaternary structure, interacts (via C-terminus) with MKLN1. In the kidney cortex and medulla, adrenal gland and stomach. In kidney, expression is higher in tubules in the outer medulla, with lower levels in cortex. In kidney cortex, expression is restricted to distal tubules.

Its subcellular location is the cell membrane. Receptor for prostaglandin E2 (PGE2). Required for normal development of fever in response to pyrinogens, including IL1B, prostaglandin E2 and bacterial lipopolysaccharide (LPS). Required for normal potentiation of platelet aggregation by prostaglandin E2, and thus plays a role in the regulation of blood coagulation. Required for increased HCO3(-) secretion in the duodenum in response to mucosal acidification, and thereby contributes to the protection of the mucosa against acid-induced ulceration. Not required for normal kidney function, normal urine volume and osmolality. This chain is Prostaglandin E2 receptor EP3 subtype (PTGER3), found in Oryctolagus cuniculus (Rabbit).